The sequence spans 488 residues: PPE family protein PPE10 (488 aa).

Disordered stretches follow at residues 207-232 (NNNWGSGNTGSSNVGTGNTGSSNIGS) and 443-488 (SDAG…LRTE).

This sequence belongs to the mycobacterial PPE family.

It is found in the secreted. Plays a major role in the integrity and stability of the capsule. In Mycobacterium marinum (strain ATCC BAA-535 / M), this protein is PPE family protein PPE10.